The following is a 507-amino-acid chain: MRKGGIQDAEPVEPPQSSRKSGTWFAKRPSEMPERHVERAPVRQKINNVGLYKATLYSNIGSFFFGIAVGWSGTAERSVMEQHSYSFQPTELQWSGVCILLTLGAALWCLPMGLMVRLLGCRRTILIQLLPNFLGWFLTVFARSVPMLYAGRFFLGMCGGAHCVVVPIYNAEISTTKKRGAMGVVFEGACICGVIYSFAMSLFLELRIINFVNLGLLALGPLQILMPESPAYYVDHGNIPRAEDSLRFLRGQKYDTRREIDFLTRDPTESEREVRQGPLLGFKYKKVRRSLARSLAIALLQKLCGALIFIFYGLNMLDCLRIRREFGLILCLGLILGFLACFFLVDRLGRRPLLIFSSAGIVFVSIYLGLHFKVWMTMGLTVMSWIALFCIAIFVGCYTAGVGSLTWVLNAELLVRPMRPLGCSIVCAFNWLTAFFVICWFGSHGVKCQPYLFLLFAIIASLILLFSLIYIPETKKLSSAKIQQRLGGLINRPAVITFTSSSDSSNA.

Residues 1–26 (MRKGGIQDAEPVEPPQSSRKSGTWFA) form a disordered region. The Cytoplasmic portion of the chain corresponds to 1–53 (MRKGGIQDAEPVEPPQSSRKSGTWFAKRPSEMPERHVERAPVRQKINNVGLYK). Residues 54–74 (ATLYSNIGSFFFGIAVGWSGT) traverse the membrane as a helical segment. Residues 75-95 (AERSVMEQHSYSFQPTELQWS) are Extracellular-facing. The chain crosses the membrane as a helical span at residues 96 to 116 (GVCILLTLGAALWCLPMGLMV). The Cytoplasmic segment spans residues 117–124 (RLLGCRRT). Residues 125-145 (ILIQLLPNFLGWFLTVFARSV) traverse the membrane as a helical segment. Residues 146 to 152 (PMLYAGR) lie on the Extracellular side of the membrane. Residues 153-173 (FFLGMCGGAHCVVVPIYNAEI) traverse the membrane as a helical segment. At 174-183 (STTKKRGAMG) the chain is on the cytoplasmic side. Residues 184 to 204 (VVFEGACICGVIYSFAMSLFL) form a helical membrane-spanning segment. Residues 205-207 (ELR) are Extracellular-facing. A helical transmembrane segment spans residues 208–228 (IINFVNLGLLALGPLQILMPE). The Cytoplasmic segment spans residues 229–293 (SPAYYVDHGN…YKKVRRSLAR (65 aa)). Residues 294–314 (SLAIALLQKLCGALIFIFYGL) traverse the membrane as a helical segment. At 315–324 (NMLDCLRIRR) the chain is on the extracellular side. Residues 325–345 (EFGLILCLGLILGFLACFFLV) form a helical membrane-spanning segment. The Cytoplasmic segment spans residues 346–351 (DRLGRR). A helical membrane pass occupies residues 352 to 372 (PLLIFSSAGIVFVSIYLGLHF). Residues 373 to 374 (KV) lie on the Extracellular side of the membrane. Residues 375–395 (WMTMGLTVMSWIALFCIAIFV) traverse the membrane as a helical segment. The Cytoplasmic portion of the chain corresponds to 396–420 (GCYTAGVGSLTWVLNAELLVRPMRP). Residues 421–441 (LGCSIVCAFNWLTAFFVICWF) form a helical membrane-spanning segment. Topologically, residues 442 to 450 (GSHGVKCQP) are extracellular. A helical transmembrane segment spans residues 451–471 (YLFLLFAIIASLILLFSLIYI). Over 472–507 (PETKKLSSAKIQQRLGGLINRPAVITFTSSSDSSNA) the chain is Cytoplasmic.

This sequence belongs to the major facilitator superfamily. Sugar transporter (TC 2.A.1.1) family. Glucose transporter subfamily.

It localises to the cell membrane. Its subcellular location is the perikaryon. The protein localises to the cell projection. Its function is as follows. Facilitative glucose transporter that can also mediate the uptake of various other monosaccharides across the cell membrane. In Drosophila melanogaster (Fruit fly), this protein is Glucose transporter type 3 (Glut3).